Reading from the N-terminus, the 162-residue chain is NADH-quinone oxidoreductase subunit I (162 aa).

4Fe-4S ferredoxin-type domains lie at Leu-53–Ala-83 and Thr-93–Ile-122. 8 residues coordinate [4Fe-4S] cluster: Cys-63, Cys-66, Cys-69, Cys-73, Cys-102, Cys-105, Cys-108, and Cys-112.

The protein belongs to the complex I 23 kDa subunit family. In terms of assembly, NDH-1 is composed of 14 different subunits. Subunits NuoA, H, J, K, L, M, N constitute the membrane sector of the complex. Requires [4Fe-4S] cluster as cofactor.

Its subcellular location is the cell inner membrane. The enzyme catalyses a quinone + NADH + 5 H(+)(in) = a quinol + NAD(+) + 4 H(+)(out). NDH-1 shuttles electrons from NADH, via FMN and iron-sulfur (Fe-S) centers, to quinones in the respiratory chain. The immediate electron acceptor for the enzyme in this species is believed to be ubiquinone. Couples the redox reaction to proton translocation (for every two electrons transferred, four hydrogen ions are translocated across the cytoplasmic membrane), and thus conserves the redox energy in a proton gradient. This chain is NADH-quinone oxidoreductase subunit I, found in Xanthomonas oryzae pv. oryzae (strain MAFF 311018).